A 372-amino-acid chain; its full sequence is Transcription factor MYB80 (372 aa).

HTH myb-type domains follow at residues 9 to 65 (KDNV…RPDL) and 66 to 116 (KHGE…KKKL). 2 DNA-binding regions (H-T-H motif) span residues 37–61 (WRLI…TNYL) and 89–112 (WSVI…NTKL). Residues 298-311 (MWSHQSLYSGSSGT) show a composition bias toward polar residues. Residues 298-347 (MWSHQSLYSGSSGTEEARRELPEKGNDSVGSSGGDDDAADDGKDSGKGAA) form a disordered region. The segment covering 312–323 (EEARRELPEKGN) has biased composition (basic and acidic residues).

The protein localises to the nucleus. Essential for tapetum development in anthers and microsporogenesis. May regulate the timing of tapetal programmed cell death (PCD) which is critical for pollen development. This chain is Transcription factor MYB80, found in Oryza sativa subsp. japonica (Rice).